The primary structure comprises 185 residues: Large ribosomal subunit protein uL5 (185 aa).

The protein belongs to the universal ribosomal protein uL5 family. Part of the 50S ribosomal subunit; part of the 5S rRNA/L5/L18/L25 subcomplex. Contacts the 5S rRNA and the P site tRNA. Forms a bridge to the 30S subunit in the 70S ribosome.

Functionally, this is one of the proteins that bind and probably mediate the attachment of the 5S RNA into the large ribosomal subunit, where it forms part of the central protuberance. In the 70S ribosome it contacts protein S13 of the 30S subunit (bridge B1b), connecting the 2 subunits; this bridge is implicated in subunit movement. Contacts the P site tRNA; the 5S rRNA and some of its associated proteins might help stabilize positioning of ribosome-bound tRNAs. The sequence is that of Large ribosomal subunit protein uL5 from Rhodopseudomonas palustris (strain BisB5).